Consider the following 303-residue polypeptide: Mycothiol acetyltransferase (303 aa).

N-acetyltransferase domains follow at residues 6-134 (TSLA…VEGD) and 154-303 (NEAY…QSSS). Glutamate 37 contacts 1D-myo-inositol 2-(L-cysteinylamino)-2-deoxy-alpha-D-glucopyranoside. Acetyl-CoA contacts are provided by residues 75-77 (VVV) and 83-88 (RQGYGS). Glutamate 180, lysine 221, and glutamate 233 together coordinate 1D-myo-inositol 2-(L-cysteinylamino)-2-deoxy-alpha-D-glucopyranoside. Acetyl-CoA is bound by residues 237-239 (VGL) and 244-250 (RRRGLGD). Tyrosine 271 lines the 1D-myo-inositol 2-(L-cysteinylamino)-2-deoxy-alpha-D-glucopyranoside pocket. Position 276 to 281 (276 to 281 (NESARR)) interacts with acetyl-CoA.

It belongs to the acetyltransferase family. MshD subfamily. In terms of assembly, monomer.

It carries out the reaction 1D-myo-inositol 2-(L-cysteinylamino)-2-deoxy-alpha-D-glucopyranoside + acetyl-CoA = mycothiol + CoA + H(+). Functionally, catalyzes the transfer of acetyl from acetyl-CoA to desacetylmycothiol (Cys-GlcN-Ins) to form mycothiol. In Corynebacterium diphtheriae (strain ATCC 700971 / NCTC 13129 / Biotype gravis), this protein is Mycothiol acetyltransferase.